The sequence spans 87 residues: MQITDIRIRKVEKEGKMKAVVSITIDDEFVVHDIKVIEGEKGLFIAMPSRKANDGEYRDIAHPINSATRENIQNMILEKYKTEIENV.

The protein belongs to the SpoVG family.

Could be involved in septation. This is Putative septation protein SpoVG from Agathobacter rectalis (strain ATCC 33656 / DSM 3377 / JCM 17463 / KCTC 5835 / VPI 0990) (Eubacterium rectale).